The primary structure comprises 288 residues: MMRILLFLATNFAVLFVFNIILTLTGIQRQDAVGLLIFATLFGFTGSIISLLMSKSMALRSVNGQVIEQPRNETEHWLLQTVHSQAERAGLPMPTVAIYHSADVNAFATGATKKNSLVAVSTGLLNAMTRDEAEAVLAHEVSHIKSGDMVTMTLLQGVLNTFVIFISRMLAKVVATDRDGNTSQGIYFMISMVLELVFGVLASMIAMWFSRYREFKADAGSAELVGKHKMIAALQRLKTLHEPQEMEGQLAAFAINGKRGGLASLFLSHPPLEKRIEALRNLDSLNGK.

Transmembrane regions (helical) follow at residues 4 to 24 and 33 to 53; these read ILLF…ILTL and VGLL…SLLM. A Zn(2+)-binding site is contributed by H139. E140 is an active-site residue. H143 serves as a coordination point for Zn(2+). 2 consecutive transmembrane segments (helical) span residues 146 to 166 and 186 to 206; these read SGDM…VIFI and IYFM…SMIA. E214 contributes to the Zn(2+) binding site.

The protein belongs to the peptidase M48B family. Zn(2+) serves as cofactor.

Its subcellular location is the cell inner membrane. The protein is Protease HtpX of Histophilus somni (strain 2336) (Haemophilus somnus).